A 37-amino-acid polypeptide reads, in one-letter code: Large ribosomal subunit protein bL36c (37 aa).

This sequence belongs to the bacterial ribosomal protein bL36 family.

The protein resides in the plastid. The protein localises to the chloroplast. This chain is Large ribosomal subunit protein bL36c (rpl36), found in Pisum sativum (Garden pea).